We begin with the raw amino-acid sequence, 1027 residues long: Translation initiation factor IF-2 (1027 aa).

The segment at tyrosine 31–glycine 433 is disordered. Over residues lysine 57 to glycine 68 the composition is skewed to gly residues. A compositionally biased stretch (pro residues) spans glycine 110 to proline 122. Residues alanine 123–proline 145 are compositionally biased toward low complexity. Positions glutamate 148–glycine 171 are enriched in basic and acidic residues. 2 stretches are compositionally biased toward pro residues: residues proline 174 to glycine 188 and proline 201 to arginine 212. A compositionally biased stretch (gly residues) spans proline 237 to alanine 268. Positions glycine 293 to glycine 302 are enriched in pro residues. The span at serine 311–glycine 397 shows a compositional bias: gly residues. The segment covering arginine 401–lysine 410 has biased composition (basic residues). In terms of domain architecture, tr-type G spans serine 523 to aspartate 695. The G1 stretch occupies residues glycine 532–threonine 539. Position 532 to 539 (glycine 532 to threonine 539) interacts with GTP. The interval glycine 557–histidine 561 is G2. Residues aspartate 582 to glycine 585 are G3. Residues aspartate 582–histidine 586 and asparagine 636–aspartate 639 each bind GTP. Residues asparagine 636 to aspartate 639 form a G4 region. A G5 region spans residues serine 672–arginine 674.

The protein belongs to the TRAFAC class translation factor GTPase superfamily. Classic translation factor GTPase family. IF-2 subfamily.

The protein localises to the cytoplasm. Its function is as follows. One of the essential components for the initiation of protein synthesis. Protects formylmethionyl-tRNA from spontaneous hydrolysis and promotes its binding to the 30S ribosomal subunits. Also involved in the hydrolysis of GTP during the formation of the 70S ribosomal complex. The sequence is that of Translation initiation factor IF-2 from Saccharopolyspora erythraea (strain ATCC 11635 / DSM 40517 / JCM 4748 / NBRC 13426 / NCIMB 8594 / NRRL 2338).